Consider the following 829-residue polypeptide: Leucine--tRNA ligase (829 aa).

The 'HIGH' region signature appears at 40 to 51; the sequence is PYPSGAGLHVGH. A 'KMSKS' region motif is present at residues 609–613; sequence KMSKS. Position 612 (lysine 612) interacts with ATP.

The protein belongs to the class-I aminoacyl-tRNA synthetase family.

It localises to the cytoplasm. The enzyme catalyses tRNA(Leu) + L-leucine + ATP = L-leucyl-tRNA(Leu) + AMP + diphosphate. This is Leucine--tRNA ligase from Lactococcus lactis subsp. lactis (strain IL1403) (Streptococcus lactis).